The sequence spans 284 residues: Tropomyosin (284 aa).

Disordered stretches follow at residues 1 to 27 and 99 to 131; these read MDAIKKKMQAMKVDRENAQDLAEQMEQ and YERSEEKLNSTTEKLEEASKAADESERNRKVLE. Positions 1-273 form a coiled coil; it reads MDAIKKKMQA…KERYKAISDD (273 aa). A compositionally biased stretch (basic and acidic residues) spans 102–131; that stretch reads SEEKLNSTTEKLEEASKAADESERNRKVLE.

It belongs to the tropomyosin family. As to quaternary structure, homodimer.

Functionally, tropomyosin, in association with the troponin complex, plays a central role in the calcium dependent regulation of muscle contraction. The protein is Tropomyosin of Mimachlamys nobilis (Noble scallop).